Here is a 338-residue protein sequence, read N- to C-terminus: Mitotic spindle-associated protein SHE1 (338 aa).

Residues 1-14 show a composition bias toward basic and acidic residues; that stretch reads MNDKLQEEHNEKDT. Disordered regions lie at residues 1 to 29, 67 to 88, and 116 to 146; these read MNDK…MSID, LKDQ…SGSY, and HTPK…IPYT. The segment covering 72-88 has biased composition (polar residues); that stretch reads EQQYNGDKNNEPKSGSY. The residue at position 165 (Ser165) is a Phosphoserine. 2 disordered regions span residues 210–263 and 284–338; these read TNSL…QGTN and RSTS…PIWR. Residues 216-234 show a composition bias toward low complexity; that stretch reads INSAHRNTSSSSTASSIPR. The segment covering 242 to 254 has biased composition (basic and acidic residues); the sequence is SIRDLHAKTKPVE. Composition is skewed to polar residues over residues 284 to 297 and 312 to 330; these read RSTS…GTSA and SKTS…ATGT.

Belongs to the SHE1 family.

The protein resides in the cytoplasm. It is found in the cytoskeleton. Its subcellular location is the spindle. The protein localises to the bud neck. In terms of biological role, may have a role related to the spindle integrity function of the DAM1 complex, which is essential for proper chromosome segregation. Causes growth arrest when highly overexpressed. The protein is Mitotic spindle-associated protein SHE1 (SHE1) of Saccharomyces cerevisiae (strain YJM789) (Baker's yeast).